The sequence spans 352 residues: Probable gamma-glutamyl hydrolase 3 (352 aa).

The signal sequence occupies residues M1–K19. One can recognise a Gamma-glutamyl hydrolase domain in the interval A49–T352. C166 (nucleophile) is an active-site residue. Residue H279 is part of the active site.

The protein belongs to the peptidase C26 family.

It is found in the vacuole. The protein resides in the secreted. The protein localises to the extracellular space. It localises to the cell wall. It carries out the reaction (6S)-5,6,7,8-tetrahydrofolyl-(gamma-L-Glu)(n) + (n-1) H2O = (6S)-5,6,7,8-tetrahydrofolate + (n-1) L-glutamate. Its function is as follows. Cleaves the polyglutamate sidechains of folate polyglutamates in the vacuole. Is important for polyglutamyl tail length determination before vacuolar exit. Plays a role on folate stability and intracellular folate content. The chain is Probable gamma-glutamyl hydrolase 3 (GGH3) from Arabidopsis thaliana (Mouse-ear cress).